The sequence spans 546 residues: NAD(P)H-quinone oxidoreductase chain 4 (546 aa).

14 helical membrane-spanning segments follow: residues 24 to 44 (FPWLSISILFPIASAFLIPFF), 56 to 76 (FALSVALITFLVTVGAYINGF), 106 to 126 (ISMPLILLTSFITALAVLAAW), 132 to 152 (PKLFFFLILIMDGGQIAVFAV), 156 to 176 (LLFFLTWELELLPVYLLLAIW), 188 to 208 (FIIYTAGSSIFILLAALAMGF), 232 to 252 (ILCYIGLLIAFGVKLPIVPLH), 263 to 283 (TAPVHMLLAGILLKMGGYALL), 297 to 317 (FAPLLIVLGVVNIIYAALTSF), 326 to 346 (IAYSSISHMGFVLIGIGSFSS), 352 to 372 (AMLQMVSHGLIGASLFFLVGA), 396 to 416 (FALWTACSLASLALPGMSGFV), 437 to 457 (VVMASLAAVGVILTPIYLLSM), and 484 to 504 (VYIIACLLLPIIGIGLYPRLV).

Belongs to the complex I subunit 4 family.

The protein localises to the cellular thylakoid membrane. The catalysed reaction is a plastoquinone + NADH + (n+1) H(+)(in) = a plastoquinol + NAD(+) + n H(+)(out). It catalyses the reaction a plastoquinone + NADPH + (n+1) H(+)(in) = a plastoquinol + NADP(+) + n H(+)(out). Functionally, NDH-1 shuttles electrons from NAD(P)H, via FMN and iron-sulfur (Fe-S) centers, to quinones in the respiratory chain. The immediate electron acceptor for the enzyme in this species is believed to be plastoquinone. Couples the redox reaction to proton translocation (for every two electrons transferred, four hydrogen ions are translocated across the cytoplasmic membrane), and thus conserves the redox energy in a proton gradient. In Prochlorococcus marinus (strain MIT 9515), this protein is NAD(P)H-quinone oxidoreductase chain 4.